A 332-amino-acid polypeptide reads, in one-letter code: 2,7-dihydroxy-5-methyl-1-naphthoate 7-O-methyltransferase (332 aa).

Arg11 is a binding site for substrate. S-adenosyl-L-methionine contacts are provided by residues Trp133, His153, 175 to 179, Gly177, Asp200, 227 to 228, and 242 to 243; these read DVGGG, SF, and SA. Residue His246 is the Proton acceptor of the active site. Asp247 contacts substrate.

The protein belongs to the class I-like SAM-binding methyltransferase superfamily. Cation-independent O-methyltransferase family.

It carries out the reaction 2,7-dihydroxy-5-methyl-1-naphthoate + S-adenosyl-L-methionine = 2-hydroxy-7-methoxy-5-methyl-1-naphthoate + S-adenosyl-L-homocysteine + H(+). It functions in the pathway antibiotic biosynthesis. In terms of biological role, S-adenosyl-L-methionine-dependent O-methyltransferase that catalyzes regiospecific methylation at the 7-hydroxy group of 2,7-dihydroxy-5-methyl-1-naphthoate in the biosynthesis of the naphthoate moiety of the neocarzinostatin chromophore. Also recognizes other dihydroxynaphthoate as substrates and catalyzes their regiospecific O-methylation. The carboxylate and its ortho-hydroxy groups of the substrate appear to be crucial for NcsB1 substrate recognition and binding, and O-methylation takes place only at the free hydroxy group of these dihydroxynaphthoic acids. This is 2,7-dihydroxy-5-methyl-1-naphthoate 7-O-methyltransferase from Streptomyces carzinostaticus.